The sequence spans 303 residues: tRNA-cytidine(32) 2-sulfurtransferase (303 aa).

The short motif at 49–54 (SGGKDS) is the PP-loop motif element. Residues C124, C127, and C215 each coordinate [4Fe-4S] cluster.

The protein belongs to the TtcA family. As to quaternary structure, homodimer. Requires Mg(2+) as cofactor. [4Fe-4S] cluster is required as a cofactor.

The protein resides in the cytoplasm. It carries out the reaction cytidine(32) in tRNA + S-sulfanyl-L-cysteinyl-[cysteine desulfurase] + AH2 + ATP = 2-thiocytidine(32) in tRNA + L-cysteinyl-[cysteine desulfurase] + A + AMP + diphosphate + H(+). It participates in tRNA modification. In terms of biological role, catalyzes the ATP-dependent 2-thiolation of cytidine in position 32 of tRNA, to form 2-thiocytidine (s(2)C32). The sulfur atoms are provided by the cysteine/cysteine desulfurase (IscS) system. The polypeptide is tRNA-cytidine(32) 2-sulfurtransferase (Anaeromyxobacter sp. (strain Fw109-5)).